Reading from the N-terminus, the 568-residue chain is Putative U-box domain-containing protein 55 (568 aa).

The stretch at 217 to 464 (QSESDRNDQL…KVAAEKDAAS (248 aa)) forms a coiled coil. The U-box domain occupies 496–568 (QPPSYFICPI…AIQEWLQRNS (73 aa)).

The enzyme catalyses S-ubiquitinyl-[E2 ubiquitin-conjugating enzyme]-L-cysteine + [acceptor protein]-L-lysine = [E2 ubiquitin-conjugating enzyme]-L-cysteine + N(6)-ubiquitinyl-[acceptor protein]-L-lysine.. The protein operates within protein modification; protein ubiquitination. Functionally, functions as an E3 ubiquitin ligase. The polypeptide is Putative U-box domain-containing protein 55 (PUB55) (Arabidopsis thaliana (Mouse-ear cress)).